We begin with the raw amino-acid sequence, 178 residues long: Nicotinamide-nucleotide adenylyltransferase (178 aa).

The protein belongs to the archaeal NMN adenylyltransferase family. Homohexamer.

The protein localises to the cytoplasm. The enzyme catalyses beta-nicotinamide D-ribonucleotide + ATP + H(+) = diphosphate + NAD(+). It functions in the pathway cofactor biosynthesis; NAD(+) biosynthesis; NAD(+) from nicotinamide D-ribonucleotide: step 1/1. This Methanothermobacter thermautotrophicus (strain ATCC 29096 / DSM 1053 / JCM 10044 / NBRC 100330 / Delta H) (Methanobacterium thermoautotrophicum) protein is Nicotinamide-nucleotide adenylyltransferase.